We begin with the raw amino-acid sequence, 247 residues long: 2,3-bisphosphoglycerate-dependent phosphoglycerate mutase (247 aa).

Residues 7-14 (RHGESEWN), 20-21 (TG), Arg-59, 86-89 (ERHY), Lys-97, 113-114 (RR), and 182-183 (GN) contribute to the substrate site. His-8 acts as the Tele-phosphohistidine intermediate in catalysis. The active-site Proton donor/acceptor is Glu-86.

This sequence belongs to the phosphoglycerate mutase family. BPG-dependent PGAM subfamily.

The enzyme catalyses (2R)-2-phosphoglycerate = (2R)-3-phosphoglycerate. Its pathway is carbohydrate degradation; glycolysis; pyruvate from D-glyceraldehyde 3-phosphate: step 3/5. Catalyzes the interconversion of 2-phosphoglycerate and 3-phosphoglycerate. The polypeptide is 2,3-bisphosphoglycerate-dependent phosphoglycerate mutase (Treponema denticola (strain ATCC 35405 / DSM 14222 / CIP 103919 / JCM 8153 / KCTC 15104)).